The chain runs to 174 residues: MNRENKQQQVAELHEKLKRAKAVFLADFRGMSVEQATTLRNELRAAAVEYKVAKNTLLELASKETDKESLSPHYAGPTAIAFSYDDPVAAAKVLSKFAKTQANTFKLKAAVLSGKQISVSDIQALADLPSREVLLAKLLGTINAPVANFVGVLAAVPGSFVRALNAIKIQKEGN.

It belongs to the universal ribosomal protein uL10 family. As to quaternary structure, part of the ribosomal stalk of the 50S ribosomal subunit. The N-terminus interacts with L11 and the large rRNA to form the base of the stalk. The C-terminus forms an elongated spine to which L12 dimers bind in a sequential fashion forming a multimeric L10(L12)X complex.

Functionally, forms part of the ribosomal stalk, playing a central role in the interaction of the ribosome with GTP-bound translation factors. This is Large ribosomal subunit protein uL10 from Geobacter metallireducens (strain ATCC 53774 / DSM 7210 / GS-15).